A 49-amino-acid polypeptide reads, in one-letter code: Disintegrin eristostatin (49 aa).

The 49-residue stretch at 1–49 folds into the Disintegrin domain; it reads QEEPCATGPCCRRCKFKRAGKVCRVARGDWNDDYCTGKSCDCPKNPWNG. Intrachain disulfides connect Cys-5/Cys-14, Cys-10/Cys-35, Cys-11/Cys-40, and Cys-23/Cys-42. Positions 27–29 match the Cell attachment site motif; sequence RGD.

This sequence belongs to the venom metalloproteinase (M12B) family. P-II subfamily. P-IIa sub-subfamily. In terms of assembly, monomer. In terms of tissue distribution, expressed by the venom gland.

Its subcellular location is the secreted. In terms of biological role, is a potent inhibitor of ADP-induced platelet aggregation. Acts by binding to alpha-IIb/beta-3 (ITGA2B/ITGB3) receptor on the platelet surface. Binds with the same high affinity to resting and activated platelets. Also binds the alpha-4/beta-1 (ITGA4/ITGB1) integrin. Is a potent inhibitor of human and murine melanoma metastases in mouse model systems, also due to the inhibition of binding between the alpha-4/beta-1 integrin and the vascular cell adhesion protein VCAM1. Reacts neither with the integrin alpha-V/beta-3 (ITGAV/ITGB3) vitronectin receptor nor with the integrin alpha-5/beta-1 (ITGA5/ITGB1) fibronectin receptor. Has no effect on cell proliferation or angiogenesis. Specifically inhibits cell migration on fibronectin, but not that on collagen IV or laminin. May involve fibronectin-binding integrins that mediate cell migration. The protein is Disintegrin eristostatin of Eristicophis macmahoni (Leaf-nosed viper).